The chain runs to 239 residues: Ribonuclease PH (239 aa).

Phosphate contacts are provided by residues Arg87 and 125–127; that span reads GTR.

The protein belongs to the RNase PH family. Homohexameric ring arranged as a trimer of dimers.

The catalysed reaction is tRNA(n+1) + phosphate = tRNA(n) + a ribonucleoside 5'-diphosphate. In terms of biological role, phosphorolytic 3'-5' exoribonuclease that plays an important role in tRNA 3'-end maturation. Removes nucleotide residues following the 3'-CCA terminus of tRNAs; can also add nucleotides to the ends of RNA molecules by using nucleoside diphosphates as substrates, but this may not be physiologically important. Probably plays a role in initiation of 16S rRNA degradation (leading to ribosome degradation) during starvation. The sequence is that of Ribonuclease PH from Pseudomonas aeruginosa (strain LESB58).